Here is a 195-residue protein sequence, read N- to C-terminus: Putative NADH dehydrogenase/NAD(P)H nitroreductase Caul_0018 (195 aa).

This sequence belongs to the nitroreductase family. HadB/RutE subfamily. FMN is required as a cofactor.

The sequence is that of Putative NADH dehydrogenase/NAD(P)H nitroreductase Caul_0018 from Caulobacter sp. (strain K31).